The chain runs to 438 residues: Diaminopimelate decarboxylase (438 aa).

Lys-73 carries the N6-(pyridoxal phosphate)lysine modification. Residues Ser-217, Gly-254, and 294–297 (EPGR) contribute to the pyridoxal 5'-phosphate site. Arg-297, Arg-333, and Tyr-337 together coordinate substrate. The Proton donor role is filled by Cys-362. Positions 363 and 391 each coordinate substrate. Residue Tyr-391 coordinates pyridoxal 5'-phosphate.

Belongs to the Orn/Lys/Arg decarboxylase class-II family. LysA subfamily. Homodimer. Pyridoxal 5'-phosphate is required as a cofactor.

The enzyme catalyses meso-2,6-diaminopimelate + H(+) = L-lysine + CO2. The protein operates within amino-acid biosynthesis; L-lysine biosynthesis via DAP pathway; L-lysine from DL-2,6-diaminopimelate: step 1/1. Its activity is regulated as follows. Competitively inhibited by the substrate analog azelaic acid in vitro but not in vivo. In terms of biological role, specifically catalyzes the decarboxylation of meso-diaminopimelate (meso-DAP) to L-lysine. The protein is Diaminopimelate decarboxylase of Methanocaldococcus jannaschii (strain ATCC 43067 / DSM 2661 / JAL-1 / JCM 10045 / NBRC 100440) (Methanococcus jannaschii).